The primary structure comprises 379 residues: Glucose-1-phosphate adenylyltransferase (379 aa).

Residues glycine 164, 179-180, and serine 190 each bind alpha-D-glucose 1-phosphate; that span reads EK.

Belongs to the bacterial/plant glucose-1-phosphate adenylyltransferase family. Homotetramer.

It carries out the reaction alpha-D-glucose 1-phosphate + ATP + H(+) = ADP-alpha-D-glucose + diphosphate. It participates in glycan biosynthesis; glycogen biosynthesis. Involved in the biosynthesis of ADP-glucose, a building block required for the elongation reactions to produce glycogen. Catalyzes the reaction between ATP and alpha-D-glucose 1-phosphate (G1P) to produce pyrophosphate and ADP-Glc. The sequence is that of Glucose-1-phosphate adenylyltransferase from Streptococcus equi subsp. zooepidemicus (strain H70).